The primary structure comprises 354 residues: tRNA dimethylallyltransferase (354 aa).

28–35 (GPTATGKS) contributes to the ATP binding site. Residue 30 to 35 (TATGKS) coordinates substrate. Residues 53-56 (DSRQ) are interaction with substrate tRNA.

This sequence belongs to the IPP transferase family. As to quaternary structure, monomer. The cofactor is Mg(2+).

The enzyme catalyses adenosine(37) in tRNA + dimethylallyl diphosphate = N(6)-dimethylallyladenosine(37) in tRNA + diphosphate. In terms of biological role, catalyzes the transfer of a dimethylallyl group onto the adenine at position 37 in tRNAs that read codons beginning with uridine, leading to the formation of N6-(dimethylallyl)adenosine (i(6)A). The polypeptide is tRNA dimethylallyltransferase (Synechococcus sp. (strain JA-2-3B'a(2-13)) (Cyanobacteria bacterium Yellowstone B-Prime)).